Here is a 108-residue protein sequence, read N- to C-terminus: UPF0102 protein Sputcn32_3693 (108 aa).

It belongs to the UPF0102 family.

The protein is UPF0102 protein Sputcn32_3693 of Shewanella putrefaciens (strain CN-32 / ATCC BAA-453).